Consider the following 239-residue polypeptide: Purine nucleoside phosphorylase DeoD-type (239 aa).

H5 lines the a purine D-ribonucleoside pocket. Residues G21, R25, R44, and 88-91 (RVGS) contribute to the phosphate site. Residues 180-182 (EME) and 204-205 (SD) contribute to the a purine D-ribonucleoside site. Catalysis depends on D205, which acts as the Proton donor.

Belongs to the PNP/UDP phosphorylase family. As to quaternary structure, homohexamer; trimer of homodimers.

It carries out the reaction a purine D-ribonucleoside + phosphate = a purine nucleobase + alpha-D-ribose 1-phosphate. The enzyme catalyses a purine 2'-deoxy-D-ribonucleoside + phosphate = a purine nucleobase + 2-deoxy-alpha-D-ribose 1-phosphate. Functionally, catalyzes the reversible phosphorolytic breakdown of the N-glycosidic bond in the beta-(deoxy)ribonucleoside molecules, with the formation of the corresponding free purine bases and pentose-1-phosphate. This chain is Purine nucleoside phosphorylase DeoD-type, found in Citrobacter koseri (strain ATCC BAA-895 / CDC 4225-83 / SGSC4696).